The chain runs to 160 residues: Ribosomal RNA large subunit methyltransferase H (160 aa).

S-adenosyl-L-methionine is bound by residues Leu-76, Gly-108, and 127 to 132 (FGRMTF).

It belongs to the RNA methyltransferase RlmH family. Homodimer.

It is found in the cytoplasm. The catalysed reaction is pseudouridine(1915) in 23S rRNA + S-adenosyl-L-methionine = N(3)-methylpseudouridine(1915) in 23S rRNA + S-adenosyl-L-homocysteine + H(+). Functionally, specifically methylates the pseudouridine at position 1915 (m3Psi1915) in 23S rRNA. This Methylocella silvestris (strain DSM 15510 / CIP 108128 / LMG 27833 / NCIMB 13906 / BL2) protein is Ribosomal RNA large subunit methyltransferase H.